Consider the following 479-residue polypeptide: Adenylate kinase 8 (479 aa).

Adenylate kinase regions lie at residues 58–258 (PKVV…TYVQ) and 269–471 (PKVL…SGII). Position 67–72 (67–72 (ASGKTT)) interacts with ATP. The interval 87 to 113 (TKESLLEREFSRLSVEAKSYYQVYKKI) is NMP 1. Residues 140–143 (GIPE), Gln147, and Arg203 contribute to the AMP site. Residues 177 to 206 (GKRIDPVTGEIYHTTFDWPPEPEIQNRLRQ) are LID 1. 278–283 (GSGKRL) lines the ATP pocket. Positions 298–327 (SCGQLLKEAVAAKSSFGELIQPFFEKRMTV) are NMP 2. Residues 325–327 (MTV), 354–357 (GFPR), and Gln361 each bind AMP. The tract at residues 391-424 (LRRTDPVTGERFHLMYKPPPTIEVQVRLLQNPKD) is LID 2. Arg392 is an ATP binding site.

It belongs to the adenylate kinase family. As to quaternary structure, interacts with CFAP45 and CFAP52; CFAP45 and AK8 dimerization may create a cavity at the interface of the dimer that can accommodate AMP.

It localises to the cytoplasm. The protein resides in the cytosol. Its subcellular location is the cytoskeleton. It is found in the cilium axoneme. The enzyme catalyses AMP + ATP = 2 ADP. The catalysed reaction is a 2'-deoxyribonucleoside 5'-diphosphate + ATP = a 2'-deoxyribonucleoside 5'-triphosphate + ADP. It carries out the reaction a ribonucleoside 5'-diphosphate + ATP = a ribonucleoside 5'-triphosphate + ADP. Nucleoside monophosphate (NMP) kinase that catalyzes the reversible transfer of the terminal phosphate group between nucleoside triphosphates and monophosphates. Has highest activity toward AMP, and weaker activity toward dAMP, CMP and dCMP. Also displays broad nucleoside diphosphate kinase activity. This chain is Adenylate kinase 8 (Ak8), found in Mus musculus (Mouse).